A 100-amino-acid chain; its full sequence is NADH-quinone oxidoreductase subunit K (100 aa).

Helical transmembrane passes span 4-24 (LFHGLFLSLILFILGLTSLIV), 28-48 (ILFILISLEIMMNAVGLALIV), and 60-80 (IMYIFVITLAASEASIALALL).

This sequence belongs to the complex I subunit 4L family. As to quaternary structure, NDH-1 is composed of 13 different subunits. Subunits NuoA, H, J, K, L, M, N constitute the membrane sector of the complex.

The protein localises to the cell membrane. It catalyses the reaction a quinone + NADH + 5 H(+)(in) = a quinol + NAD(+) + 4 H(+)(out). Functionally, NDH-1 shuttles electrons from NADH, via FMN and iron-sulfur (Fe-S) centers, to quinones in the respiratory chain. The immediate electron acceptor for the enzyme in this species is believed to be ubiquinone. Couples the redox reaction to proton translocation (for every two electrons transferred, four hydrogen ions are translocated across the cytoplasmic membrane), and thus conserves the redox energy in a proton gradient. The protein is NADH-quinone oxidoreductase subunit K of Buchnera aphidicola subsp. Acyrthosiphon pisum (strain 5A).